We begin with the raw amino-acid sequence, 830 residues long: Scavenger receptor class F member 1 (830 aa).

The signal sequence occupies residues M1–G19. The Extracellular segment spans residues S20–T421. 4 consecutive EGF-like domains span residues T53–S87, W95–E130, W155–S191, and W215–E249. Cystine bridges form between C57/C69, C63/C75, C77/C86, C99/C111, C105/C118, C120/C129, C159/C172, C165/C179, C181/C190, C219/C230, C225/C237, and C239/C248. An N-linked (GlcNAc...) asparagine glycan is attached at N289. EGF-like domains lie at F302–E339 and C351–N382. 6 cysteine pairs are disulfide-bonded: C306–C319, C313–C326, C329–C338, C355–C363, C358–C370, and C372–C381. Residues N382 and N393 are each glycosylated (N-linked (GlcNAc...) asparagine). The chain crosses the membrane as a helical span at residues A422–A442. Over C443–P830 the chain is Cytoplasmic. Disordered regions lie at residues G516–C539, S581–V688, and F715–P830. A phosphoserine mark is found at S589 and S606. A compositionally biased stretch (acidic residues) spans E634–A643. A compositionally biased stretch (low complexity) spans P644 to P653.

As to quaternary structure, heterophilic interaction with SREC2 via its extracellular domain. The heterophilic interaction is suppressed by the presence of ligand such as Ac-LDL. Interacts with AVIL. As to expression, endothelial cells.

The protein resides in the membrane. Mediates the binding and degradation of acetylated low density lipoprotein (Ac-LDL). Mediates heterophilic interactions, suggesting a function as adhesion protein. Plays a role in the regulation of neurite-like outgrowth. The polypeptide is Scavenger receptor class F member 1 (SCARF1) (Homo sapiens (Human)).